Here is a 730-residue protein sequence, read N- to C-terminus: 1,4-alpha-glucan branching enzyme GlgB (730 aa).

D405 serves as the catalytic Nucleophile. E458 functions as the Proton donor in the catalytic mechanism.

Belongs to the glycosyl hydrolase 13 family. GlgB subfamily. In terms of assembly, monomer.

It carries out the reaction Transfers a segment of a (1-&gt;4)-alpha-D-glucan chain to a primary hydroxy group in a similar glucan chain.. The protein operates within glycan biosynthesis; glycogen biosynthesis. Functionally, catalyzes the formation of the alpha-1,6-glucosidic linkages in glycogen by scission of a 1,4-alpha-linked oligosaccharide from growing alpha-1,4-glucan chains and the subsequent attachment of the oligosaccharide to the alpha-1,6 position. This Haemophilus influenzae (strain 86-028NP) protein is 1,4-alpha-glucan branching enzyme GlgB.